The sequence spans 294 residues: Nucleotide-binding protein Daud_0300 (294 aa).

Residue 11–18 (GLSGAGKT) coordinates ATP. Residue 62–65 (DIRG) participates in GTP binding.

It belongs to the RapZ-like family.

In terms of biological role, displays ATPase and GTPase activities. The polypeptide is Nucleotide-binding protein Daud_0300 (Desulforudis audaxviator (strain MP104C)).